The primary structure comprises 446 residues: ATP synthase subunit b-delta (446 aa).

The interval 1-168 (MSTFIGQLVG…PAAADVQYPL (168 aa)) is ATP synthase subunit b. A helical transmembrane segment spans residues 4-24 (FIGQLVGFAAIVFLVVRYVVP). An ATP synthase subunit delta region spans residues 169–446 (MTKMRSSSRV…LAAAEAQLPD (278 aa)).

This sequence in the N-terminal section; belongs to the ATPase B chain family. It in the C-terminal section; belongs to the ATPase delta chain family. As to quaternary structure, F-type ATPases have 2 components, F(1) - the catalytic core - and F(0) - the membrane proton channel. F(1) has five subunits: alpha(3), beta(3), gamma(1), delta(1), epsilon(1). F(0) has three main subunits: a(1), b(2) and c(10-14). The alpha and beta chains form an alternating ring which encloses part of the gamma chain. F(1) is attached to F(0) by a central stalk formed by the gamma and epsilon chains, while a peripheral stalk is formed by the delta and b chains.

The protein localises to the cell membrane. F(1)F(0) ATP synthase produces ATP from ADP in the presence of a proton or sodium gradient. F-type ATPases consist of two structural domains, F(1) containing the extramembraneous catalytic core and F(0) containing the membrane proton channel, linked together by a central stalk and a peripheral stalk. During catalysis, ATP synthesis in the catalytic domain of F(1) is coupled via a rotary mechanism of the central stalk subunits to proton translocation. In terms of biological role, this fusion protein includes a component of the F(0) channel (subunit b) and of the F(1) subunit (subunit delta). Two copies of subunit b and one of delta together form the peripheral 'stator' stalk which links F(1) to F(0). The polypeptide is ATP synthase subunit b-delta (atpFH) (Mycobacterium avium (strain 104)).